A 70-amino-acid chain; its full sequence is U2-agatoxin-Ao1m (70 aa).

The signal sequence occupies residues 1–20 (MRAIISLFLISAMVFSMIQA). The propeptide occupies 21-34 (VPEEXGLQLSEDER). Disulfide bonds link C37-C53, C44-C58, and C52-C68. L69 carries the leucine amide modification.

The protein belongs to the neurotoxin 01 (U2-agtx) family. As to expression, expressed by the venom gland.

The protein resides in the secreted. Its function is as follows. Insect active toxin causing rapid but reversible paralysis in crickets. No activity shown in mammals. Does not show effect on mammalian voltage-gated calcium channels. The chain is U2-agatoxin-Ao1m from Agelena orientalis (Funnel-web spider).